Reading from the N-terminus, the 84-residue chain is Antitoxin VapB30 (84 aa).

Its function is as follows. Antitoxin component of a type II toxin-antitoxin (TA) system. Upon expression in M.smegmatis neutralizes the effect of cognate toxin VapC30. This chain is Antitoxin VapB30 (vapB30), found in Mycobacterium tuberculosis (strain ATCC 25618 / H37Rv).